The sequence spans 62 residues: Large ribosomal subunit protein eL37 (62 aa).

Zn(2+) contacts are provided by Cys-20, Cys-23, Cys-35, and Cys-38. The C4-type zinc finger occupies 20–38; the sequence is CRRCGRHSFNVAKGYCAAC.

This sequence belongs to the eukaryotic ribosomal protein eL37 family. The cofactor is Zn(2+).

Binds to the 23S rRNA. This is Large ribosomal subunit protein eL37 from Desulfurococcus amylolyticus (strain DSM 18924 / JCM 16383 / VKM B-2413 / 1221n) (Desulfurococcus kamchatkensis).